The chain runs to 158 residues: Transcription elongation factor GreA (158 aa).

The stretch at Ala-47 to Glu-68 forms a coiled coil.

Belongs to the GreA/GreB family.

In terms of biological role, necessary for efficient RNA polymerase transcription elongation past template-encoded arresting sites. The arresting sites in DNA have the property of trapping a certain fraction of elongating RNA polymerases that pass through, resulting in locked ternary complexes. Cleavage of the nascent transcript by cleavage factors such as GreA or GreB allows the resumption of elongation from the new 3'terminus. GreA releases sequences of 2 to 3 nucleotides. This is Transcription elongation factor GreA from Flavobacterium johnsoniae (strain ATCC 17061 / DSM 2064 / JCM 8514 / BCRC 14874 / CCUG 350202 / NBRC 14942 / NCIMB 11054 / UW101) (Cytophaga johnsonae).